Here is a 794-residue protein sequence, read N- to C-terminus: Protein sel-1 homolog 1 (794 aa).

An N-terminal signal peptide occupies residues 1 to 21; that stretch reads MRVRIGLTLLLCAVLLSLASA. The segment at 21–50 is disordered; it reads ASSDEEGSQDESLDSKTTLTSDESVKDHTT. The interval 22 to 737 is interaction with ERLEC1, OS9 and SYVN1; the sequence is SSDEEGSQDE…DMFTQLDMDQ (716 aa). Residues 22–738 are Lumenal-facing; sequence SSDEEGSQDE…MFTQLDMDQL (717 aa). The span at 23 to 32 shows a compositional bias: acidic residues; it reads SDEEGSQDES. Ser-63 carries the post-translational modification Phosphoserine. Positions 64–77 are enriched in acidic residues; it reads EESELESSIQEEED. Positions 64-109 are disordered; sequence EESELESSIQEEEDSLKSQEGESVTEDISFLESPNPENKDYEEPKK. Residues 122–170 form the Fibronectin type-II domain; it reads AHGEPCHFPFLFLDKEYDECTSDGREDGRLWCATTYDYKADEKWGFCET. Intrachain disulfides connect Cys-127/Cys-153 and Cys-141/Cys-168. Sel1-like repeat units follow at residues 183–218, 219–254, 255–290, 291–326, 373–409, 410–446, 447–482, 483–518, and 519–554; these read AEMM…SMNH, TKAL…EEGS, PKGQ…LGGN, LIAH…NHVA, VQAQ…NAGN, SHAM…DMGN, PVGQ…EQGW, VDGQ…QGGH, and ILAF…ERGR. Asn-195 and Asn-217 each carry an N-linked (GlcNAc...) asparagine glycan. N-linked (GlcNAc...) asparagine glycosylation is present at Asn-272. An important for homodimerization and oligomerization region spans residues 352–537; the sequence is NSGMLEEDLI…MHASGTGVMR (186 aa). Asn-431 carries an N-linked (GlcNAc...) asparagine glycan. A glycan (N-linked (GlcNAc...) asparagine) is linked at Asn-608. Sel1-like repeat units follow at residues 627 to 662 and 664 to 699; these read TVAR…EQQH and AQAM…EASP. The interval 643-723 is interaction with SYVN1; that stretch reads TDVDYETAFI…VVYFLQYIRE (81 aa). Residues 738 to 794 form a mediates retention in the endoplasmic reticulum region; the sequence is LLGPEWDLYLMTIIALLLGTVIAYRQRQHQDMPAPRPPGPRPAPPQQEGPPEQQPPQ. The helical transmembrane segment at 739-759 threads the bilayer; sequence LGPEWDLYLMTIIALLLGTVI. The Cytoplasmic segment spans residues 760–794; the sequence is AYRQRQHQDMPAPRPPGPRPAPPQQEGPPEQQPPQ. Positions 766–794 are disordered; sequence HQDMPAPRPPGPRPAPPQQEGPPEQQPPQ. Pro residues predominate over residues 771-794; that stretch reads APRPPGPRPAPPQQEGPPEQQPPQ.

Belongs to the sel-1 family. As to quaternary structure, homodimer and homooligomer. May form a complex with ERLEC1, HSPA5, OS9, and SYVN1. Interacts with FOXRED2 and EDEM1. Interacts with LPL. Interacts with LMF1; may stabilize the complex formed by LPL and LMF1 and thereby promote the export of LPL dimers. Component of the HRD1 complex, which comprises at least SYNV1/HRD1, DERL1/2, FAM8A1, HERPUD1/HERP, OS9, SEL1L and UBE2J1. SYNV1 assembles with SEL1L and FAM8A1 through its transmembrane domains, but interaction with its cytoplasmic domain is required to confer stability to FAM8A1 and enhance recruitment of HERPUD1. The interaction with SYNV1/HRD1 is direct. (Microbial infection) Interacts with human cytomegalovirus protein UL148. Post-translationally, N-glycosylated. In terms of tissue distribution, highly expressed in pancreas.

It is found in the endoplasmic reticulum membrane. Functionally, plays a role in the endoplasmic reticulum quality control (ERQC) system also called ER-associated degradation (ERAD) involved in ubiquitin-dependent degradation of misfolded endoplasmic reticulum proteins. Enhances SYVN1 stability. Plays a role in LPL maturation and secretion. Required for normal differentiation of the pancreas epithelium, and for normal exocrine function and survival of pancreatic cells. May play a role in Notch signaling. This Homo sapiens (Human) protein is Protein sel-1 homolog 1.